Consider the following 375-residue polypeptide: uncharacterized protein (375 aa).

This is an uncharacterized protein from Ureaplasma parvum serovar 3 (strain ATCC 700970).